Here is a 348-residue protein sequence, read N- to C-terminus: WW domain binding protein 1-like (348 aa).

Residues 42 to 62 (LWWFWLVWTVVIILSCCCVCH) traverse the membrane as a helical segment. 2 disordered regions span residues 111 to 253 (VVNR…RRFT) and 306 to 348 (CLSS…GSPS). The segment covering 134-155 (LPPPPQGGPPGGSPPGADPPPQ) has biased composition (pro residues). Positions 156–177 (GSQGAQSSPLSGPSRSSTRPPS) are enriched in low complexity. Ser-177 carries the post-translational modification Phosphoserine. A compositionally biased stretch (basic and acidic residues) spans 220-234 (SECKEELLKDSRSER). The segment covering 331–348 (NTINEQDSPNSQHSGSPS) has biased composition (polar residues).

Its subcellular location is the membrane. The sequence is that of WW domain binding protein 1-like (Wbp1l) from Mus musculus (Mouse).